The sequence spans 309 residues: Ornithine carbamoyltransferase (309 aa).

Residues 56-59, Gln83, Arg107, and 134-137 contribute to the carbamoyl phosphate site; these read STRT and HPCQ. L-ornithine contacts are provided by residues Asn165, Asp223, and 227–228; that span reads SM. Carbamoyl phosphate is bound by residues 263–264 and Arg291; that span reads CL.

The protein belongs to the aspartate/ornithine carbamoyltransferase superfamily. OTCase family.

The protein resides in the cytoplasm. It catalyses the reaction carbamoyl phosphate + L-ornithine = L-citrulline + phosphate + H(+). Its pathway is amino-acid biosynthesis; L-arginine biosynthesis; L-arginine from L-ornithine and carbamoyl phosphate: step 1/3. Reversibly catalyzes the transfer of the carbamoyl group from carbamoyl phosphate (CP) to the N(epsilon) atom of ornithine (ORN) to produce L-citrulline. The protein is Ornithine carbamoyltransferase of Burkholderia mallei (strain ATCC 23344).